We begin with the raw amino-acid sequence, 57 residues long: DNA gyrase inhibitor YacG (57 aa).

Cysteine 10, cysteine 13, cysteine 25, and cysteine 29 together coordinate Zn(2+).

The protein belongs to the DNA gyrase inhibitor YacG family. In terms of assembly, interacts with GyrB. The cofactor is Zn(2+).

Its function is as follows. Inhibits all the catalytic activities of DNA gyrase by preventing its interaction with DNA. Acts by binding directly to the C-terminal domain of GyrB, which probably disrupts DNA binding by the gyrase. This Brucella melitensis biotype 1 (strain ATCC 23456 / CCUG 17765 / NCTC 10094 / 16M) protein is DNA gyrase inhibitor YacG.